The following is a 264-amino-acid chain: MGQKIHPTGFRLAVSRNWASRWYANNNNFAAMLQEDIGVREYLKKKLKNASVGRVVIERPAKNARITIFSSRPGVVIGKKGEDIELLKSELQKRMGVPVHVNIEEIRKPETDAQLIADSITQQLERRIMFRRAMKRAMQNAMRLGAQGIKIMSAGRLNGIEIARTEWYREGRVPLHTLRADIDYATSEAKTTYGIIGVKVWVYKGDTLGRNDAPVVEEVAEEKRPRRNARPGDRRPRRDGEGAPAGARRGAPRRGGAGDGKTGE.

The region spanning 39 to 107 is the KH type-2 domain; that stretch reads VREYLKKKLK…PVHVNIEEIR (69 aa). The disordered stretch occupies residues 217–264; sequence EEVAEEKRPRRNARPGDRRPRRDGEGAPAGARRGAPRRGGAGDGKTGE. A compositionally biased stretch (basic and acidic residues) spans 230–241; the sequence is RPGDRRPRRDGE. Positions 253 to 264 are enriched in gly residues; it reads RRGGAGDGKTGE.

Belongs to the universal ribosomal protein uS3 family. In terms of assembly, part of the 30S ribosomal subunit. Forms a tight complex with proteins S10 and S14.

Functionally, binds the lower part of the 30S subunit head. Binds mRNA in the 70S ribosome, positioning it for translation. The polypeptide is Small ribosomal subunit protein uS3 (Paraburkholderia phymatum (strain DSM 17167 / CIP 108236 / LMG 21445 / STM815) (Burkholderia phymatum)).